A 288-amino-acid polypeptide reads, in one-letter code: Probable pectinesterase 56 (288 aa).

The signal sequence occupies residues 1–27; that stretch reads MAMTSTMQLLVLSFLVIASLFLGATVA. Residues Asn-55 and Asn-95 are each glycosylated (N-linked (GlcNAc...) asparagine). The substrate site is built by Thr-120 and Gln-150. The Proton donor role is filled by Asp-173. Asp-194 serves as the catalytic Nucleophile. An N-linked (GlcNAc...) asparagine glycan is attached at Asn-242. Arg-262 and Trp-264 together coordinate substrate.

Belongs to the pectinesterase family.

The protein resides in the secreted. It is found in the cell wall. The enzyme catalyses [(1-&gt;4)-alpha-D-galacturonosyl methyl ester](n) + n H2O = [(1-&gt;4)-alpha-D-galacturonosyl](n) + n methanol + n H(+). Its pathway is glycan metabolism; pectin degradation; 2-dehydro-3-deoxy-D-gluconate from pectin: step 1/5. Acts in the modification of cell walls via demethylesterification of cell wall pectin. The sequence is that of Probable pectinesterase 56 (PME56) from Arabidopsis thaliana (Mouse-ear cress).